A 562-amino-acid chain; its full sequence is Methionine--tRNA ligase, mitochondrial (562 aa).

A mitochondrion-targeting transit peptide spans 1–10; sequence MLRSLALRTF. Residues 43-53 carry the 'HIGH' region motif; sequence FYVNAAPHLGH. The 'KMSKS' region motif lies at 332–336; it reads KMSKS. Lysine 335 lines the ATP pocket.

Belongs to the class-I aminoacyl-tRNA synthetase family.

The protein localises to the mitochondrion matrix. The catalysed reaction is tRNA(Met) + L-methionine + ATP = L-methionyl-tRNA(Met) + AMP + diphosphate. The protein is Methionine--tRNA ligase, mitochondrial (mars2) of Xenopus laevis (African clawed frog).